Here is a 423-residue protein sequence, read N- to C-terminus: MAKIVVTGGAALHGEVSISGAKNAVLPILCATLLADEPVEITNVPHLHDVVTTVKLLGELGAKVTIDQGTLSRGSAIVVDPRPVNQHVAPYELVKTMRASILVLGPLLARFGAAEVSLPGGCAIGSRPVDQHIKGLQALGAEIVVENGFIKASAKRLKGGHFTFDMVSVTGTENVLMGAVLAEGTTVLDNCAMEPEVTDLAHCLIALGAKIEGLGTARLVIEGVERLSGGRHEVLPDRIETGTFLVAAAMTGGKVTVNRARPNTMDAVLSKLVEAGAKIETTDDSITLDMQGRRPKAVNLTTAPYPAFPTDMQAQFMALNCVADGVGVINETIFENRFMHVNELLRLGADIQVEGHTAIVRGSEHLSGAPVMATDLRASASLILAGLMASGDTTIDRIYHLDRGYENIEEKLSSLGATIRRVP.

Phosphoenolpyruvate is bound at residue 22-23; the sequence is KN. Arg-98 provides a ligand contact to UDP-N-acetyl-alpha-D-glucosamine. Residue Cys-122 is the Proton donor of the active site. Cys-122 carries the 2-(S-cysteinyl)pyruvic acid O-phosphothioketal modification. UDP-N-acetyl-alpha-D-glucosamine-binding positions include 127-131, Asp-311, and Ile-333; that span reads RPVDQ.

This sequence belongs to the EPSP synthase family. MurA subfamily.

The protein resides in the cytoplasm. It catalyses the reaction phosphoenolpyruvate + UDP-N-acetyl-alpha-D-glucosamine = UDP-N-acetyl-3-O-(1-carboxyvinyl)-alpha-D-glucosamine + phosphate. Its pathway is cell wall biogenesis; peptidoglycan biosynthesis. In terms of biological role, cell wall formation. Adds enolpyruvyl to UDP-N-acetylglucosamine. The sequence is that of UDP-N-acetylglucosamine 1-carboxyvinyltransferase from Stenotrophomonas maltophilia (strain K279a).